Reading from the N-terminus, the 248-residue chain is Methyl-coenzyme M reductase subunit gamma (248 aa).

Arg-121 is a coenzyme M binding site.

It belongs to the methyl-coenzyme M reductase gamma subunit family. As to quaternary structure, MCR is a hexamer of two alpha, two beta, and two gamma chains, forming a dimer of heterotrimers. Coenzyme F430 serves as cofactor.

It localises to the cytoplasm. It catalyses the reaction coenzyme B + methyl-coenzyme M = methane + coenzyme M-coenzyme B heterodisulfide. It participates in one-carbon metabolism; methyl-coenzyme M reduction; methane from methyl-coenzyme M: step 1/1. Component of the methyl-coenzyme M reductase (MCR) I that catalyzes the reductive cleavage of methyl-coenzyme M (CoM-S-CH3 or 2-(methylthio)ethanesulfonate) using coenzyme B (CoB or 7-mercaptoheptanoylthreonine phosphate) as reductant which results in the production of methane and the mixed heterodisulfide of CoB and CoM (CoM-S-S-CoB). This is the final step in methanogenesis. In Methanosarcina barkeri (strain Fusaro / DSM 804), this protein is Methyl-coenzyme M reductase subunit gamma (mcrG).